Consider the following 228-residue polypeptide: MKEPFTNASYFPPVETALVDPNGLLAIGGDLSQERLLDAYRHGIFPWFNPREPIQWWSPDPRMVLPPAEIRVTRSLAKRLRNAGFELRVDSAFIEVMRACGAPREGAWGTWISAPMIAAYGRLFDAGYAHSIETWRDGRLVGGLYGVAIGRMFYGESMFSREPDASKVALVRLARQLERWGFGLIDCQMETPHLASMGARPIPRADFTARLAELVNLPHLPGPWTFDS.

The protein belongs to the L/F-transferase family.

The protein resides in the cytoplasm. It carries out the reaction N-terminal L-lysyl-[protein] + L-leucyl-tRNA(Leu) = N-terminal L-leucyl-L-lysyl-[protein] + tRNA(Leu) + H(+). The catalysed reaction is N-terminal L-arginyl-[protein] + L-leucyl-tRNA(Leu) = N-terminal L-leucyl-L-arginyl-[protein] + tRNA(Leu) + H(+). The enzyme catalyses L-phenylalanyl-tRNA(Phe) + an N-terminal L-alpha-aminoacyl-[protein] = an N-terminal L-phenylalanyl-L-alpha-aminoacyl-[protein] + tRNA(Phe). Functionally, functions in the N-end rule pathway of protein degradation where it conjugates Leu, Phe and, less efficiently, Met from aminoacyl-tRNAs to the N-termini of proteins containing an N-terminal arginine or lysine. This chain is Leucyl/phenylalanyl-tRNA--protein transferase, found in Thiobacillus denitrificans (strain ATCC 25259 / T1).